The chain runs to 61 residues: N-acetyl-D-glucosamine kinase (61 aa).

The residue at position 30 (Tyr30) is a Phosphotyrosine. Ser45 is an ATP binding site.

It belongs to the eukaryotic-type N-acetylglucosamine kinase family. As to quaternary structure, homodimer.

It carries out the reaction N-acetyl-D-glucosamine + ATP = N-acetyl-D-glucosamine 6-phosphate + ADP + H(+). The enzyme catalyses aldehydo-N-acetyl-D-mannosamine + ATP = aldehydo-N-acetyl-D-mannosamine 6-phosphate + ADP + H(+). The catalysed reaction is N-acetyl-D-muramoyl-L-alanyl-D-isoglutamine + ATP = 6-O-phospho-N-acetyl-D-muramoyl-L-alanyl-D-isoglutamine + ADP + H(+). It functions in the pathway amino-sugar metabolism; N-acetylneuraminate degradation. Its function is as follows. Converts endogenous N-acetylglucosamine (GlcNAc), a major component of complex carbohydrates, from lysosomal degradation or nutritional sources into GlcNAc 6-phosphate. Also has N-acetylmannosamine (ManNAc) kinase activity. Involved in the N-glycolylneuraminic acid (Neu5Gc) degradation pathway. Also involved in innate immunity by promoting detection of bacterial peptidoglycan by NOD2: acts by catalyzing phosphorylation of muramyl dipeptide (MDP), a fragment of bacterial peptidoglycan, to generate 6-O-phospho-muramyl dipeptide, which acts as a direct ligand for NOD2. In Mesocricetus auratus (Golden hamster), this protein is N-acetyl-D-glucosamine kinase.